The following is a 436-amino-acid chain: 3-ketoacyl-CoA thiolase (436 aa).

C99 (acyl-thioester intermediate) is an active-site residue. Catalysis depends on proton acceptor residues H392 and C422.

It belongs to the thiolase-like superfamily. Thiolase family. As to quaternary structure, heterotetramer of two alpha chains (FadJ) and two beta chains (FadI).

It is found in the cytoplasm. The catalysed reaction is an acyl-CoA + acetyl-CoA = a 3-oxoacyl-CoA + CoA. Its pathway is lipid metabolism; fatty acid beta-oxidation. In terms of biological role, catalyzes the final step of fatty acid oxidation in which acetyl-CoA is released and the CoA ester of a fatty acid two carbons shorter is formed. The polypeptide is 3-ketoacyl-CoA thiolase (Shigella flexneri).